Here is a 171-residue protein sequence, read N- to C-terminus: Protein E6 (171 aa).

The tract at residues 1–28 is disordered; it reads MATTDSSTDSADEGPSPKSSYCDTTETK. The span at 17-28 shows a compositional bias: polar residues; sequence PKSSYCDTTETK. Zinc fingers lie at residues 58–94 and 131–167; these read CNFCGNFLTHLEVCEFDQKKLSLIWKGHCVFACCRVC and CYTCMRFLDSIEKLDICGRKLPFHKVRGSWKGICRLC.

It belongs to the papillomaviridae E6 protein family. Forms homodimers. Interacts with ubiquitin-protein ligase UBE3A/E6-AP; this interaction stimulates UBE3A ubiquitin activity. Interacts with host BAK1.

The protein localises to the host cytoplasm. Its subcellular location is the host nucleus. Its function is as follows. Plays a major role in the induction and maintenance of cellular transformation. E6 associates with host UBE3A/E6-AP ubiquitin-protein ligase and modulates its activity. Protects host keratinocytes from apoptosis by mediating the degradation of host BAK1. May also inhibit host immune response. The sequence is that of Protein E6 from Human papillomavirus 14.